The following is a 334-amino-acid chain: Glyceraldehyde-3-phosphate dehydrogenase 2 (334 aa).

NAD(+) contacts are provided by residues 12–13 (RI), Asp35, and Arg79. Residues 152-154 (SCT), Thr183, Arg198, 211-212 (SG), and Arg234 contribute to the D-glyceraldehyde 3-phosphate site. Cys153 (nucleophile) is an active-site residue. Asn315 is an NAD(+) binding site.

The protein belongs to the glyceraldehyde-3-phosphate dehydrogenase family. As to quaternary structure, homotetramer.

Its subcellular location is the cytoplasm. The catalysed reaction is D-glyceraldehyde 3-phosphate + phosphate + NAD(+) = (2R)-3-phospho-glyceroyl phosphate + NADH + H(+). The protein operates within carbohydrate degradation; glycolysis; pyruvate from D-glyceraldehyde 3-phosphate: step 1/5. With respect to regulation, inhibited by pentalenolactone (PL). Catalyzes the oxidative phosphorylation of glyceraldehyde 3-phosphate (G3P) to 1,3-bisphosphoglycerate (BPG) using the cofactor NAD. The first reaction step involves the formation of a hemiacetal intermediate between G3P and a cysteine residue, and this hemiacetal intermediate is then oxidized to a thioester, with concomitant reduction of NAD to NADH. The reduced NADH is then exchanged with the second NAD, and the thioester is attacked by a nucleophilic inorganic phosphate to produce BPG. The protein is Glyceraldehyde-3-phosphate dehydrogenase 2 (gap2) of Streptomyces arenae.